Here is a 285-residue protein sequence, read N- to C-terminus: 2-dehydro-3-deoxyphosphooctonate aldolase (285 aa).

This sequence belongs to the KdsA family.

It localises to the cytoplasm. The enzyme catalyses D-arabinose 5-phosphate + phosphoenolpyruvate + H2O = 3-deoxy-alpha-D-manno-2-octulosonate-8-phosphate + phosphate. The protein operates within carbohydrate biosynthesis; 3-deoxy-D-manno-octulosonate biosynthesis; 3-deoxy-D-manno-octulosonate from D-ribulose 5-phosphate: step 2/3. It participates in bacterial outer membrane biogenesis; lipopolysaccharide biosynthesis. This Variovorax paradoxus (strain S110) protein is 2-dehydro-3-deoxyphosphooctonate aldolase.